We begin with the raw amino-acid sequence, 455 residues long: Anaerobic glycerol-3-phosphate dehydrogenase subunit B (455 aa).

This sequence belongs to the anaerobic G-3-P dehydrogenase subunit B family. As to quaternary structure, composed of a catalytic GlpA/B dimer and of membrane bound GlpC. FMN serves as cofactor.

It catalyses the reaction a quinone + sn-glycerol 3-phosphate = dihydroxyacetone phosphate + a quinol. Its pathway is polyol metabolism; glycerol degradation via glycerol kinase pathway; glycerone phosphate from sn-glycerol 3-phosphate (anaerobic route): step 1/1. Its function is as follows. Conversion of glycerol 3-phosphate to dihydroxyacetone. Uses fumarate or nitrate as electron acceptor. The sequence is that of Anaerobic glycerol-3-phosphate dehydrogenase subunit B from Aliivibrio fischeri (strain ATCC 700601 / ES114) (Vibrio fischeri).